A 498-amino-acid polypeptide reads, in one-letter code: Envelop protein OPG153 (498 aa).

Cys-43 and Cys-342 are joined by a disulfide. The segment at 352 to 391 (ATDTGHHQDSKINIKDDDVDDDDYNPKPTPIPEPYPRPPF) is disordered. Positions 355–367 (TGHHQDSKINIKD) are enriched in basic and acidic residues. The span at 378 to 390 (KPTPIPEPYPRPP) shows a compositional bias: pro residues.

This sequence belongs to the orthopoxvirus OPG153 protein family. In terms of assembly, interacts with proteins OPG094 and OPG143. Interacts with OPG154. Interacts with OPG152. Interacts with host laminin.

It is found in the virion membrane. Functionally, envelop protein that mediates acid-dependent endocytosis into host cells. Plays an important role in endocytic entry of the virus by acting as an acid-sensitive membrane fusion suppressor. Low pH in host endosomes triggers conformational changes to allow de-repression of viral fusion complex activity and membrane fusion within vesicles. Also plays a role in bridging the mature virion with structural protein OPG152. This is Envelop protein OPG153 (Protein OPG153) from Variola virus (isolate Human/India/Ind3/1967) (VARV).